Here is a 384-residue protein sequence, read N- to C-terminus: Lipid-A-disaccharide synthase (384 aa).

The protein belongs to the LpxB family.

It carries out the reaction a lipid X + a UDP-2-N,3-O-bis[(3R)-3-hydroxyacyl]-alpha-D-glucosamine = a lipid A disaccharide + UDP + H(+). Its pathway is bacterial outer membrane biogenesis; LPS lipid A biosynthesis. Condensation of UDP-2,3-diacylglucosamine and 2,3-diacylglucosamine-1-phosphate to form lipid A disaccharide, a precursor of lipid A, a phosphorylated glycolipid that anchors the lipopolysaccharide to the outer membrane of the cell. The polypeptide is Lipid-A-disaccharide synthase (Neisseria meningitidis serogroup C / serotype 2a (strain ATCC 700532 / DSM 15464 / FAM18)).